Reading from the N-terminus, the 405-residue chain is GTPase Obg (405 aa).

One can recognise an Obg domain in the interval 1–159 (MKFVDEVSIF…RDLKLELKVL (159 aa)). A disordered region spans residues 127–148 (NTRFKSSTNRAPRQTTPGKPGD). Residues 129–143 (RFKSSTNRAPRQTTP) are compositionally biased toward polar residues. Residues 160–333 (ADVGLLGLPN…LSQAIMRYLD (174 aa)) form the OBG-type G domain. GTP is bound by residues 166–173 (GLPNAGKS), 191–195 (FTTLV), 213–216 (DIPG), 283–286 (NKAD), and 314–316 (SAL). Mg(2+)-binding residues include S173 and T193. Residues 373–405 (LRRAGVKSVEEADDDDFDDDDDDEGGAEIIYVR) are disordered. Residues 383–398 (EADDDDFDDDDDDEGG) show a composition bias toward acidic residues.

It belongs to the TRAFAC class OBG-HflX-like GTPase superfamily. OBG GTPase family. As to quaternary structure, monomer. It depends on Mg(2+) as a cofactor.

It localises to the cytoplasm. Functionally, an essential GTPase which binds GTP, GDP and possibly (p)ppGpp with moderate affinity, with high nucleotide exchange rates and a fairly low GTP hydrolysis rate. Plays a role in control of the cell cycle, stress response, ribosome biogenesis and in those bacteria that undergo differentiation, in morphogenesis control. The polypeptide is GTPase Obg (Stutzerimonas stutzeri (strain A1501) (Pseudomonas stutzeri)).